The chain runs to 160 residues: Transcription antitermination protein NusB (160 aa).

The protein belongs to the NusB family.

Its function is as follows. Involved in transcription antitermination. Required for transcription of ribosomal RNA (rRNA) genes. Binds specifically to the boxA antiterminator sequence of the ribosomal RNA (rrn) operons. The sequence is that of Transcription antitermination protein NusB from Rhizobium leguminosarum bv. trifolii (strain WSM2304).